The primary structure comprises 500 residues: C6 finger domain transcription factor sirZ (500 aa).

The zn(2)-C6 fungal-type DNA-binding region spans 28-54; the sequence is CNACHEVKLKCLGGQPCARCRNKQVEC. Over residues 79–88 the composition is skewed to basic and acidic residues; the sequence is QAKAMSRPEE. Disordered stretches follow at residues 79–168 and 302–332; these read QAKA…EQIS and AGSF…GMYQ. Residues 135–147 show a composition bias toward acidic residues; sequence GAEEELLDQEERD. Over residues 154 to 165 the composition is skewed to low complexity; that stretch reads LVENPPNLNPLE. A compositionally biased stretch (polar residues) spans 304-316; sequence SFSTSGPGSSQEG. The span at 317-328 shows a compositional bias: low complexity; it reads SHFLSSRHSQSS.

The protein resides in the nucleus. Functionally, transcription factor that regulates sirodesmin production and contributes to virulence. Probably binds to the consensus motif TCGGN(3)CCGA found in the promoters of sirT, sirP, sirO, sirN, sirP, sirB, sirR, sirJ and sirQ. This is C6 finger domain transcription factor sirZ from Leptosphaeria maculans (Blackleg fungus).